The primary structure comprises 457 residues: Siroheme synthase (457 aa).

The precorrin-2 dehydrogenase /sirohydrochlorin ferrochelatase stretch occupies residues 1-204 (MDHLPIFCQL…NDQKAITETT (204 aa)). NAD(+) contacts are provided by residues 22-23 (DV) and 43-44 (LA). The residue at position 128 (serine 128) is a Phosphoserine. A uroporphyrinogen-III C-methyltransferase region spans residues 216–457 (GEVVLVGAGP…RDKLNWFSNH (242 aa)). Proline 225 contributes to the S-adenosyl-L-methionine binding site. Aspartate 248 acts as the Proton acceptor in catalysis. Lysine 270 serves as the catalytic Proton donor. Residues 301 to 303 (GGD), isoleucine 306, 331 to 332 (TA), methionine 382, and glycine 411 contribute to the S-adenosyl-L-methionine site.

This sequence in the N-terminal section; belongs to the precorrin-2 dehydrogenase / sirohydrochlorin ferrochelatase family. It in the C-terminal section; belongs to the precorrin methyltransferase family.

The catalysed reaction is uroporphyrinogen III + 2 S-adenosyl-L-methionine = precorrin-2 + 2 S-adenosyl-L-homocysteine + H(+). It catalyses the reaction precorrin-2 + NAD(+) = sirohydrochlorin + NADH + 2 H(+). The enzyme catalyses siroheme + 2 H(+) = sirohydrochlorin + Fe(2+). It participates in cofactor biosynthesis; adenosylcobalamin biosynthesis; precorrin-2 from uroporphyrinogen III: step 1/1. The protein operates within cofactor biosynthesis; adenosylcobalamin biosynthesis; sirohydrochlorin from precorrin-2: step 1/1. Its pathway is porphyrin-containing compound metabolism; siroheme biosynthesis; precorrin-2 from uroporphyrinogen III: step 1/1. It functions in the pathway porphyrin-containing compound metabolism; siroheme biosynthesis; siroheme from sirohydrochlorin: step 1/1. It participates in porphyrin-containing compound metabolism; siroheme biosynthesis; sirohydrochlorin from precorrin-2: step 1/1. Multifunctional enzyme that catalyzes the SAM-dependent methylations of uroporphyrinogen III at position C-2 and C-7 to form precorrin-2 via precorrin-1. Then it catalyzes the NAD-dependent ring dehydrogenation of precorrin-2 to yield sirohydrochlorin. Finally, it catalyzes the ferrochelation of sirohydrochlorin to yield siroheme. The protein is Siroheme synthase of Shigella flexneri.